A 437-amino-acid polypeptide reads, in one-letter code: Probable eukaryotic translation initiation factor 5-2 (437 aa).

29–36 (GKGNGIKT) contacts GTP. Basic and acidic residues-rich tracts occupy residues 148 to 179 (EQKK…EQRK) and 191 to 212 (KDSK…HDEN). Disordered stretches follow at residues 148-231 (EQKK…WQTD) and 262-284 (EKKA…PPQE). At S201 the chain carries Phosphoserine; by CK2. The span at 213–226 (ALEVDEDEDDDDGV) shows a compositional bias: acidic residues. Phosphothreonine; by CK2 is present on T230. The region spanning 278–436 (ENPPPQEKNL…QSAESESEEE (159 aa)) is the W2 domain. Phosphoserine; by CK2 occurs at positions 428, 431, and 433.

It belongs to the eIF-2-beta/eIF-5 family. Phosphorylated at Ser-201, Thr-230, Ser-428, Ser-431, and Ser-433 by CK2.

Its function is as follows. Catalyzes the hydrolysis of GTP bound to the 40S ribosomal initiation complex (40S.mRNA.Met-tRNA[F].eIF-2.GTP) with the subsequent joining of a 60S ribosomal subunit resulting in the release of eIF-2 and the guanine nucleotide. The subsequent joining of a 60S ribosomal subunit results in the formation of a functional 80S initiation complex (80S.mRNA.Met-tRNA[F]). This is Probable eukaryotic translation initiation factor 5-2 from Arabidopsis thaliana (Mouse-ear cress).